The chain runs to 231 residues: Ribonuclease HII (231 aa).

The RNase H type-2 domain maps to 23-214 (GPVAGVDEAG…VAKAHREWAL (192 aa)). 3 residues coordinate a divalent metal cation: Asp29, Glu30, and Asp123.

This sequence belongs to the RNase HII family. Requires Mn(2+) as cofactor. It depends on Mg(2+) as a cofactor.

Its subcellular location is the cytoplasm. It catalyses the reaction Endonucleolytic cleavage to 5'-phosphomonoester.. Its function is as follows. Endonuclease that specifically degrades the RNA of RNA-DNA hybrids. The sequence is that of Ribonuclease HII from Corynebacterium efficiens (strain DSM 44549 / YS-314 / AJ 12310 / JCM 11189 / NBRC 100395).